Reading from the N-terminus, the 122-residue chain is Phospholipase A2 crotoxin basic subunit CBd (122 aa).

Cystine bridges form between Cys26/Cys115, Cys28/Cys44, Cys43/Cys95, Cys49/Cys122, Cys50/Cys88, Cys57/Cys81, and Cys75/Cys86. Residues Tyr27, Gly29, and Gly31 each contribute to the Ca(2+) site. Residue His47 is part of the active site. Ca(2+) is bound at residue Asp48. Asp89 is an active-site residue.

It belongs to the phospholipase A2 family. Group II subfamily. D49 sub-subfamily. As to quaternary structure, heterodimer of one of the acidic (CA1, CA2, CA3 or CA4) and one of the basic (CBa1, CBa2, CBb, CBc or CBd) subunits; non-covalently linked. The acidic subunit is non-toxic, without enzymatic activity and comprises 3 peptides that are cross-linked by 5 disulfide bridges. The basic subunit is toxic, has phospholipase A2 activity and is composed of a single chain. Multiple variants of each subunit give different crotoxin complexes that can be subdivided into 2 classes: (1) those of high toxicity, low PLA2 activity (CBb, CBc and CBd linked with high affinity to any CA) and high stability (K(d)=4.5 nM) and (2) those of moderate toxicity, high PLA2 activity (CBa2 linked with low affinity to any CA) and low stability (K(d)=25 nM). Interacts with crotoxin inhibitor from Crotalus serum (CICS); the interaction leads to dissociation of the CA-CB heterodimer and to inhibition of PLA2 activity of the CB subunit. Interacts with human NBD1 domain of CFTR. Ca(2+) is required as a cofactor. In terms of tissue distribution, expressed by the venom gland.

It is found in the secreted. The catalysed reaction is a 1,2-diacyl-sn-glycero-3-phosphocholine + H2O = a 1-acyl-sn-glycero-3-phosphocholine + a fatty acid + H(+). Heterodimer CA-CB: Crotoxin is a potent presynaptic neurotoxin that possesses phospholipase A2 (PLA2) activity and exerts a lethal action by blocking neuromuscular transmission. It consists of a non-covalent association of a basic and weakly toxic PLA2 subunit (CBa2, CBb, CBc, or CBd), with a small acidic, non-enzymatic and non-toxic subunit (CA1, CA2, CA3 or CA4). The complex acts by binding to a specific 48-kDa protein (R48) receptor located on presynaptic membranes, forming a transient ternary complex CA-CB-R48, followed by dissociation of the CA-CB complex and release of the CA subunit. At equilibrium, only the CB subunits remain associated with the specific crotoxin receptor. In addition to neurotoxicity, crotoxin has been found to exert myotoxicity, nephrotoxicity, and cardiovascular toxicity. Moreover, anti-inflammatory, immunomodulatory, anti-tumor and analgesic effects of crotoxin have also been reported. Its function is as follows. Monomer CBd: The basic subunit of crotoxin is a snake venom phospholipase A2 (PLA2) that exhibits weak neurotoxicity (10-fold less than the heterodimer) and very strong anticoagulant effects by binding to factor Xa (F10) and inhibiting the prothrombinase activity. In addition, it shows the same effects described for the heterodimer and binds the nucleotide-binding domain (NBD1) of CFTR chloride channels and increases the channel current. PLA2 catalyzes the calcium-dependent hydrolysis of the 2-acyl groups in 3-sn-phosphoglycerides. The chain is Phospholipase A2 crotoxin basic subunit CBd from Crotalus durissus terrificus (South American rattlesnake).